A 78-amino-acid chain; its full sequence is Small ribosomal subunit protein uS15 (78 aa).

Belongs to the universal ribosomal protein uS15 family. In terms of assembly, part of the 30S ribosomal subunit. Forms a bridge to the 50S subunit in the 70S ribosome, contacting the 23S rRNA.

Functionally, one of the primary rRNA binding proteins, it binds directly to 16S rRNA where it helps nucleate assembly of the platform of the 30S subunit by binding and bridging several RNA helices of the 16S rRNA. In terms of biological role, forms an intersubunit bridge (bridge B4) with the 23S rRNA of the 50S subunit in the ribosome. The protein is Small ribosomal subunit protein uS15 of Karelsulcia muelleri (strain GWSS) (Sulcia muelleri).